A 436-amino-acid chain; its full sequence is Repulsive guidance molecule B (436 aa).

Positions 1-48 (MGVRAAPSCAAAPAAAGAEQSRRPGLWPPSPPPPLLLLLLLSLGLLHA) are cleaved as a signal peptide. An N-linked (GlcNAc...) asparagine glycan is attached at Asn-123. 2 disulfide bridges follow: Cys-142/Cys-229 and Cys-166/Cys-315. An N-linked (GlcNAc...) asparagine glycan is attached at Asn-386. Cys-415 carries the GPI-anchor amidated cysteine lipid modification. Positions 416–436 (GGCRDLPVGLGLTCLILIMFL) are cleaved as a propeptide — removed in mature form.

The protein belongs to the repulsive guidance molecule (RGM) family. Homooligomer. Interacts with DRGX. Interacts with BMP2 and BMP4. Interacts with the BMP type I receptors ACVR1, BMPR1A and BMPR1B and with the BMP type II receptor ACVR2B. The functional complex with its receptor NEO1/neogenin appears to be a heterotetramer with a 2:2 stoichiometry, RGM molecules acting as staples that bring two NEO1 receptors together without interacting themselves, this arrangement leads to activation of downstream signaling via RhoA. In terms of processing, GPI-anchored. Post-translationally, autocatalytically cleaved at low pH; the two chains remain linked via two disulfide bonds. In terms of tissue distribution, detected in neonatal and adult dorsal root ganglion sensory neurons, spinal cord, and brain (at protein level). Also expressed at high levels in retinal ganglion cells of developing mouse, extending to the optic nerve (at protein level). Expressed in testis, epididymis, ovary, uterus, and pituitary.

Its subcellular location is the cell membrane. The protein localises to the membrane raft. Its function is as follows. Member of the repulsive guidance molecule (RGM) family that contributes to the patterning of the developing nervous system. Acts as a bone morphogenetic protein (BMP) coreceptor that potentiates BMP signaling. Promotes neuronal adhesion. May inhibit neurite outgrowth. This chain is Repulsive guidance molecule B, found in Mus musculus (Mouse).